A 117-amino-acid polypeptide reads, in one-letter code: Ig heavy chain V region J558 (117 aa).

The Ig-like domain maps to 1-116 (EVQLQQSGPE…WGAGTTVTVS (116 aa)). Cysteines 22 and 96 form a disulfide.

The polypeptide is Ig heavy chain V region J558 (Mus musculus (Mouse)).